Here is a 790-residue protein sequence, read N- to C-terminus: Protein SEY1 (790 aa).

Topologically, residues 1-692 (MELSEGELSH…KRSIVQHITQ (692 aa)) are cytoplasmic. A GB1/RHD3-type G domain is found at 55 to 284 (GNNYHIISVF…VNNELFKPEY (230 aa)). 65-72 (GSQSTGKS) provides a ligand contact to GTP. A helical membrane pass occupies residues 693-713 (IPYYIYLIILVLGWNEFMAII). Residues 714 to 716 (RNP) lie on the Lumenal side of the membrane. A helical membrane pass occupies residues 717 to 737 (LFFSLSIVLGATVYVLYYLNL). The Cytoplasmic segment spans residues 738-790 (LKPAMLVAQRTMDEVIIMAKTKLREVLIDDHEVTGRQLNKIAGGKENIELDDM).

Belongs to the TRAFAC class dynamin-like GTPase superfamily. GB1/RHD3 GTPase family. RHD3 subfamily.

It is found in the endoplasmic reticulum membrane. In terms of biological role, cooperates with the reticulon proteins and tubule-shaping DP1 family proteins to generate and maintain the structure of the tubular endoplasmic reticulum network. Has GTPase activity, which is required for its function in ER organization. The chain is Protein SEY1 from Candida dubliniensis (strain CD36 / ATCC MYA-646 / CBS 7987 / NCPF 3949 / NRRL Y-17841) (Yeast).